The sequence spans 256 residues: Nickel import ATP-binding protein NikD (256 aa).

Residues 6–245 form the ABC transporter domain; it reads LEIRGLRIET…PASATARTLL (240 aa). Position 38–45 (38–45) interacts with ATP; sequence GASGSGKS.

Belongs to the ABC transporter superfamily. Nickel importer (TC 3.A.1.5.3) family. The complex is composed of two ATP-binding proteins (NikD and NikE), two transmembrane proteins (NikB and NikC) and a solute-binding protein (NikA).

The protein localises to the cell inner membrane. The catalysed reaction is Ni(2+)(out) + ATP + H2O = Ni(2+)(in) + ADP + phosphate + H(+). Functionally, part of the ABC transporter complex NikABCDE involved in nickel import. Responsible for energy coupling to the transport system. The sequence is that of Nickel import ATP-binding protein NikD from Pseudomonas putida (strain ATCC 47054 / DSM 6125 / CFBP 8728 / NCIMB 11950 / KT2440).